Reading from the N-terminus, the 88-residue chain is Putative membrane protein insertion efficiency factor (88 aa).

Belongs to the UPF0161 family.

The protein resides in the cell inner membrane. Its function is as follows. Could be involved in insertion of integral membrane proteins into the membrane. This Burkholderia vietnamiensis (strain G4 / LMG 22486) (Burkholderia cepacia (strain R1808)) protein is Putative membrane protein insertion efficiency factor.